A 416-amino-acid chain; its full sequence is MAYFLEQTDSEIFELIFEEYKRQNEHLEMIASENYTFASVMEAMGSVLTNKYAEGYPNKRYYGGCEVVDKIESLAIERAKKLFNCQFANVQAHSGSQANNAVYHALLKPYDKILGMDLSCGGHLTHGAKVSLTGKHYQSFSYGVNLDGYIDYEEALKIAQSVKPEIIVCGFSAYPREIDFKKFREIADEVGALLLGDIAHVAGLVVTGEHAHPFPHCHVVSSTTHKTLRGPRGGIILTNDEEIAAKIDKAIFPGTQGGPLMHVIAAKAVGFKENLKPEFKAYAQLVKSNMQVLAKALKEKNHKLVSGGTSNHLLLMDFLDKPYSGKDADIALGNAGITVNKNTIPGETRSPFVTSGIRIGSAALSARGMGAKEFEIIGNKISDILNDINNVSLQLHVKEELKAMVNQFPVYHQPIF.

(6S)-5,6,7,8-tetrahydrofolate contacts are provided by residues leucine 118 and 122–124 (GHL). The residue at position 226 (lysine 226) is an N6-(pyridoxal phosphate)lysine. Residues glutamate 242 and 350-352 (SPF) contribute to the (6S)-5,6,7,8-tetrahydrofolate site.

This sequence belongs to the SHMT family. In terms of assembly, homodimer. It depends on pyridoxal 5'-phosphate as a cofactor.

The protein localises to the cytoplasm. It carries out the reaction (6R)-5,10-methylene-5,6,7,8-tetrahydrofolate + glycine + H2O = (6S)-5,6,7,8-tetrahydrofolate + L-serine. Its pathway is one-carbon metabolism; tetrahydrofolate interconversion. It participates in amino-acid biosynthesis; glycine biosynthesis; glycine from L-serine: step 1/1. Its function is as follows. Catalyzes the reversible interconversion of serine and glycine with tetrahydrofolate (THF) serving as the one-carbon carrier. This reaction serves as the major source of one-carbon groups required for the biosynthesis of purines, thymidylate, methionine, and other important biomolecules. Also exhibits THF-independent aldolase activity toward beta-hydroxyamino acids, producing glycine and aldehydes, via a retro-aldol mechanism. This chain is Serine hydroxymethyltransferase, found in Helicobacter pylori (strain ATCC 700392 / 26695) (Campylobacter pylori).